We begin with the raw amino-acid sequence, 192 residues long: Elongation factor P (192 aa).

K37 carries the N6-(3,6-diaminohexanoyl)-5-hydroxylysine modification.

This sequence belongs to the elongation factor P family. Post-translationally, may be beta-lysylated on the epsilon-amino group of Lys-37 by the combined action of EpmA and EpmB, and then hydroxylated on the C5 position of the same residue by EpmC (if this protein is present). Lysylation is critical for the stimulatory effect of EF-P on peptide-bond formation. The lysylation moiety may extend toward the peptidyltransferase center and stabilize the terminal 3-CCA end of the tRNA. Hydroxylation of the C5 position on Lys-37 may allow additional potential stabilizing hydrogen-bond interactions with the P-tRNA.

It localises to the cytoplasm. Its pathway is protein biosynthesis; polypeptide chain elongation. Its function is as follows. Involved in peptide bond synthesis. Alleviates ribosome stalling that occurs when 3 or more consecutive Pro residues or the sequence PPG is present in a protein, possibly by augmenting the peptidyl transferase activity of the ribosome. Modification of Lys-37 is required for alleviation. This Acinetobacter baylyi (strain ATCC 33305 / BD413 / ADP1) protein is Elongation factor P.